Here is a 154-residue protein sequence, read N- to C-terminus: Glycosylation-dependent cell adhesion molecule 1 (154 aa).

Residues 1–18 (MKFLCILLLASLAATSLA) form the signal peptide. O-linked (GalNAc...) threonine; partial glycosylation is present at threonine 34. Residues serine 48, serine 53, serine 57, serine 59, and serine 65 each carry the phosphoserine modification. Residues 51–65 (DLSKEPSISREDLIS) show a composition bias toward basic and acidic residues. Residues 51–115 (DLSKEPSISR…EHAPSDASTT (65 aa)) form a disordered region. N-linked (GlcNAc...) asparagine glycosylation is present at asparagine 96.

Belongs to the PP3/GlyCAM-1 family. In terms of tissue distribution, highly and specifically expressed in the lactating mammary gland.

It localises to the membrane. This is Glycosylation-dependent cell adhesion molecule 1 (GLYCAM1) from Capra hircus (Goat).